We begin with the raw amino-acid sequence, 349 residues long: 4-hydroxy-2-oxovalerate aldolase 1 (349 aa).

The Pyruvate carboxyltransferase domain occupies 9 to 261; it reads ITVHDMTLRD…ATGVDVFRIQ (253 aa). 17 to 18 contributes to the substrate binding site; it reads RD. D18 contacts Mn(2+). H21 (proton acceptor) is an active-site residue. Residues S171 and H200 each coordinate substrate. Mn(2+) is bound by residues H200 and H202. A substrate-binding site is contributed by Y291.

The protein belongs to the 4-hydroxy-2-oxovalerate aldolase family.

It catalyses the reaction (S)-4-hydroxy-2-oxopentanoate = acetaldehyde + pyruvate. The chain is 4-hydroxy-2-oxovalerate aldolase 1 from Methylibium petroleiphilum (strain ATCC BAA-1232 / LMG 22953 / PM1).